Here is a 224-residue protein sequence, read N- to C-terminus: Ribose-5-phosphate isomerase A (224 aa).

Residues 34–37 (TGST), 87–90 (DGAD), and 100–103 (KGGG) contribute to the substrate site. The Proton acceptor role is filled by Glu-109. Lys-127 lines the substrate pocket.

The protein belongs to the ribose 5-phosphate isomerase family. In terms of assembly, homodimer.

The catalysed reaction is aldehydo-D-ribose 5-phosphate = D-ribulose 5-phosphate. The protein operates within carbohydrate degradation; pentose phosphate pathway; D-ribose 5-phosphate from D-ribulose 5-phosphate (non-oxidative stage): step 1/1. Functionally, catalyzes the reversible conversion of ribose-5-phosphate to ribulose 5-phosphate. The polypeptide is Ribose-5-phosphate isomerase A (Francisella tularensis subsp. tularensis (strain FSC 198)).